Here is a 90-residue protein sequence, read N- to C-terminus: Sec-independent protein translocase protein TatA (90 aa).

A helical membrane pass occupies residues 1 to 21; sequence MGLPGGWELVLIVGVLVLLFG. Residues 42-60 show a composition bias toward basic and acidic residues; sequence EARGMKEDEEAAKREKQAK. Residues 42 to 90 form a disordered region; it reads EARGMKEDEEAAKREKQAKSEPQQLTAGESSAPTVASPVEETQRNDSKK. The segment covering 61–75 has biased composition (polar residues); the sequence is SEPQQLTAGESSAPT.

It belongs to the TatA/E family. In terms of assembly, the Tat system comprises two distinct complexes: a TatABC complex, containing multiple copies of TatA, TatB and TatC subunits, and a separate TatA complex, containing only TatA subunits. Substrates initially bind to the TatABC complex, which probably triggers association of the separate TatA complex to form the active translocon.

Its subcellular location is the cell membrane. Part of the twin-arginine translocation (Tat) system that transports large folded proteins containing a characteristic twin-arginine motif in their signal peptide across membranes. TatA could form the protein-conducting channel of the Tat system. The sequence is that of Sec-independent protein translocase protein TatA from Saccharopolyspora erythraea (strain ATCC 11635 / DSM 40517 / JCM 4748 / NBRC 13426 / NCIMB 8594 / NRRL 2338).